The following is a 279-amino-acid chain: Secreted RxLR effector protein 90 (279 aa).

The N-terminal stretch at 1 to 19 (MKSAAAFATFLTLSVFVAT) is a signal peptide. A RxLR-dEER motif is present at residues 29–46 (RGLRSLADNQSTESSEGR). Disordered stretches follow at residues 29-53 (RGLR…YNHH) and 135-176 (ATPA…NLAG). Asn-37 is a glycosylation site (N-linked (GlcNAc...) asparagine). The segment covering 135–146 (ATPAPTTSVPSS) has biased composition (low complexity). The segment covering 147–163 (LVNTDTSDNQLPTTPVA) has biased composition (polar residues). Residues 166–176 (QGGGIGSNLAG) are compositionally biased toward gly residues. N-linked (GlcNAc...) asparagine glycosylation is present at Asn-217.

Belongs to the RxLR effector family.

It localises to the secreted. Its subcellular location is the host cell membrane. Functionally, secreted effector that completely suppresses the host cell death induced by cell death-inducing proteins. In Plasmopara viticola (Downy mildew of grapevine), this protein is Secreted RxLR effector protein 90.